Reading from the N-terminus, the 255-residue chain is Large ribosomal subunit protein uL4 (255 aa).

This sequence belongs to the universal ribosomal protein uL4 family. Part of the 50S ribosomal subunit.

Its function is as follows. One of the primary rRNA binding proteins, this protein initially binds near the 5'-end of the 23S rRNA. It is important during the early stages of 50S assembly. It makes multiple contacts with different domains of the 23S rRNA in the assembled 50S subunit and ribosome. In terms of biological role, forms part of the polypeptide exit tunnel. In Thermoplasma acidophilum (strain ATCC 25905 / DSM 1728 / JCM 9062 / NBRC 15155 / AMRC-C165), this protein is Large ribosomal subunit protein uL4.